The primary structure comprises 651 residues: NADH oxidase (651 aa).

Gln-104 serves as a coordination point for FMN. The active-site Proton donor is Tyr-175. Residues Arg-223 and 320-321 (GR) contribute to the FMN site. The [4Fe-4S] cluster site is built by Cys-344, Cys-347, Cys-351, and Cys-364. Ala-396, Glu-415, Gln-423, Lys-433, and Ala-460 together coordinate FAD.

It in the N-terminal section; belongs to the NADH:flavin oxidoreductase/NADH oxidase family. In terms of assembly, homohexamer. It depends on FMN as a cofactor. FAD is required as a cofactor. The cofactor is [4Fe-4S] cluster. Post-translationally, the N-terminus is blocked.

It catalyses the reaction A + NADH + H(+) = AH2 + NAD(+). In terms of biological role, reduces a range of alternative electron acceptors. The polypeptide is NADH oxidase (Thermoanaerobacter brockii (Thermoanaerobium brockii)).